The chain runs to 425 residues: MASVFLYHVVGDLTVGKPEMVEFYETETVESAIRAIGESTECGIPVWRKRTTPSLPGFVENSEMRQQRFVGILNSLDIVAFLAKTECLQEEKAMKIPVSEVVSPDNTLLKQVDPGTRLIDALEMMKQGVRRLLVPKSVVWRGMSKRFSILYNGKWLKNSENSSSSSGLSADSTNRPTTSMTSSRDKFCCLSREDVIRFLIGVLGALAPLPLTSISTLGIINQNYNFIEASLPAIEATRRPLCDPSAIAVLEQTENEQQFKIIGEISASKLWKCDYLAAAWALANLYAGQFVMGVEDNMSSRSFSDFLQTSFPGGEQNGTATNAKKFSSRSIGFNPTSPTRLSIGRSMYRGRSAPLTCKTSSSLAAVMAQMLSHRATHVWVTEADSDDVLVGVVGYGEILTAVTKQPSAFVPSNRSYEGFGNENQS.

In terms of domain architecture, CBS 1 spans 16-90 (GKPEMVEFYE…FLAKTECLQE (75 aa)). A compositionally biased stretch (low complexity) spans 159-172 (SENSSSSSGLSADS). A disordered region spans residues 159-182 (SENSSSSSGLSADSTNRPTTSMTS). Polar residues predominate over residues 173–182 (TNRPTTSMTS). 2 helical membrane passes run 200–220 (IGVL…LGII) and 275–295 (YLAA…MGVE). Residues 347–409 (MYRGRSAPLT…TAVTKQPSAF (63 aa)) enclose the CBS 2 domain.

The protein localises to the vacuole membrane. The protein is CBS domain-containing protein CBSX6 (CBSX6) of Arabidopsis thaliana (Mouse-ear cress).